We begin with the raw amino-acid sequence, 705 residues long: Polyribonucleotide nucleotidyltransferase (705 aa).

Residues D487 and D493 each contribute to the Mg(2+) site. A KH domain is found at P554–I613. The 69-residue stretch at G623 to K691 folds into the S1 motif domain.

Belongs to the polyribonucleotide nucleotidyltransferase family. As to quaternary structure, homodimer. Component of a possible RNA degradosome complex composed of rny, rnjA, rnjB, pnp, pfkA and eno (although rnjA and rnjB's presence is unclear). RNA helicase CshA may also be a member of this complex. It depends on Mg(2+) as a cofactor.

It localises to the cytoplasm. It catalyses the reaction RNA(n+1) + phosphate = RNA(n) + a ribonucleoside 5'-diphosphate. Functionally, involved in mRNA degradation. Catalyzes the phosphorolysis of single-stranded polyribonucleotides processively in the 3'- to 5'-direction. Necessary for competence development in Bacillus subtilis. May be necessary for modification of the srfA transcript (stabilization or translation activation). Involved in processing precursor type I toxin-antitoxin RNAs antitoxin SR4 and SR5 RNAs to their mature forms. This is Polyribonucleotide nucleotidyltransferase from Bacillus subtilis (strain 168).